Here is a 65-residue protein sequence, read N- to C-terminus: Large ribosomal subunit protein bL35 (65 aa).

The protein belongs to the bacterial ribosomal protein bL35 family.

This is Large ribosomal subunit protein bL35 from Paraburkholderia phytofirmans (strain DSM 17436 / LMG 22146 / PsJN) (Burkholderia phytofirmans).